A 501-amino-acid chain; its full sequence is Probable cytochrome P450 6t3 (501 aa).

Cys444 lines the heme pocket.

Belongs to the cytochrome P450 family. The cofactor is heme.

It is found in the endoplasmic reticulum membrane. Its subcellular location is the microsome membrane. In terms of biological role, may be involved in the metabolism of insect hormones and in the breakdown of synthetic insecticides. The protein is Probable cytochrome P450 6t3 (Cyp6t3) of Drosophila melanogaster (Fruit fly).